The chain runs to 271 residues: Undecaprenyl-diphosphatase (271 aa).

8 helical membrane passes run 5–25 (LLIKAFIMGIVEGLTEFLPIS), 43–63 (FATMFEIVIQLGAILAVVYYF), 80–100 (GFNLWYKTFIAFLPAAIIGIL), 109–129 (LFSPFTVAIALIVGAIMMIVI), 145–165 (VSTSKAFWIGVAQVMSLFPGM), 186–206 (AEFSFFLAIPTMLAATGFELV), 215–235 (LEWEALAVGFIMSFITALIVV), and 246–266 (VLKPFAYYRLLVGVLMLFLIA).

Belongs to the UppP family.

It is found in the cell membrane. It catalyses the reaction di-trans,octa-cis-undecaprenyl diphosphate + H2O = di-trans,octa-cis-undecaprenyl phosphate + phosphate + H(+). Its function is as follows. Catalyzes the dephosphorylation of undecaprenyl diphosphate (UPP). Confers resistance to bacitracin. In Caldanaerobacter subterraneus subsp. tengcongensis (strain DSM 15242 / JCM 11007 / NBRC 100824 / MB4) (Thermoanaerobacter tengcongensis), this protein is Undecaprenyl-diphosphatase.